The following is a 436-amino-acid chain: Prenyltransferase nscD (436 aa).

This sequence belongs to the tryptophan dimethylallyltransferase family.

It participates in secondary metabolite biosynthesis. Prenyltransferase; part of the gene cluster that mediates the biosynthesis of neosartoricin B, a prenylated anthracenone that probably exhibits T-cell antiproliferative activity, suggestive of a physiological role as an immunosuppressive agent. The non-reducing polyketide synthase nscA probably synthesizes and cyclizes the decaketide backbone. The hydrolase nscB then mediates the product release through hydrolysis followed by spontaneous decarboxylation. The prenyltransferase nscD catalyzes the addition of the dimethylallyl group to the aromatic C5. The FAD-dependent monooxygenase nscC is then responsible for the stereospecific hydroxylation at C2. Neosartoricin B can be converted into two additional compounds neosartoricins C and D. Neosartoricin C is a spirocyclic compound that is cyclized through the attack of C3 hydroxyl on C14, followed by dehydration. On the other hand, neosartoricin D is a further cyclized compound in which attack of C2 on C14 in neosartoricin C results in the formation of the acetal-containing dioxabicyclo-octanone ring. Both of these compounds are novel and possibly represent related metabolites of the gene cluster. This chain is Prenyltransferase nscD, found in Arthroderma otae (strain ATCC MYA-4605 / CBS 113480) (Microsporum canis).